We begin with the raw amino-acid sequence, 428 residues long: Serine--tRNA ligase (428 aa).

Threonine 236–glutamate 238 is an L-serine binding site. Arginine 267 to glutamate 269 lines the ATP pocket. Glutamate 290 serves as a coordination point for L-serine. Glutamate 354–serine 357 is an ATP binding site. Residue serine 388 participates in L-serine binding.

The protein belongs to the class-II aminoacyl-tRNA synthetase family. Type-1 seryl-tRNA synthetase subfamily. In terms of assembly, homodimer. The tRNA molecule binds across the dimer.

The protein localises to the cytoplasm. It catalyses the reaction tRNA(Ser) + L-serine + ATP = L-seryl-tRNA(Ser) + AMP + diphosphate + H(+). The catalysed reaction is tRNA(Sec) + L-serine + ATP = L-seryl-tRNA(Sec) + AMP + diphosphate + H(+). The protein operates within aminoacyl-tRNA biosynthesis; selenocysteinyl-tRNA(Sec) biosynthesis; L-seryl-tRNA(Sec) from L-serine and tRNA(Sec): step 1/1. In terms of biological role, catalyzes the attachment of serine to tRNA(Ser). Is also able to aminoacylate tRNA(Sec) with serine, to form the misacylated tRNA L-seryl-tRNA(Sec), which will be further converted into selenocysteinyl-tRNA(Sec). This Psychrobacter cryohalolentis (strain ATCC BAA-1226 / DSM 17306 / VKM B-2378 / K5) protein is Serine--tRNA ligase.